We begin with the raw amino-acid sequence, 186 residues long: Lipid A palmitoyltransferase PagP (186 aa).

Residues 1–25 form the signal peptide; the sequence is MNVSKYVAIFSFVFIQLISVGKVFA. Catalysis depends on residues H58, D101, and S102.

The protein belongs to the lipid A palmitoyltransferase family. Homodimer.

Its subcellular location is the cell outer membrane. The enzyme catalyses lipid A (E. coli) + a 1-hexadecanoyl-2-acyl-sn-glycero-3-phosphocholine = hepta-acyl lipid A (E. coli) + a 2-acyl-sn-glycero-3-phosphocholine. It catalyses the reaction lipid IIA + a 1-hexadecanoyl-2-acyl-sn-glycero-3-phosphocholine = lipid IIB + a 2-acyl-sn-glycero-3-phosphocholine. It carries out the reaction lipid IVA (E. coli) + a 1-hexadecanoyl-2-acyl-sn-glycero-3-phosphocholine = lipid IVB (E. coli) + a 2-acyl-sn-glycero-3-phosphocholine. Its function is as follows. Transfers a palmitate residue from the sn-1 position of a phospholipid to the N-linked hydroxymyristate on the proximal unit of lipid A or its precursors. The chain is Lipid A palmitoyltransferase PagP from Escherichia coli O157:H7.